Here is a 430-residue protein sequence, read N- to C-terminus: MHVSTLLVAVLLPLALSKPTPRKKTGSFKVHLARRGETEYSRDGPTDLQRAYAKYGIPTTHEMDGYHPQHISKLPGNSKATAGSGKEGVESQDEKGEVVNNPTNHDIQFLSPVTIGGQPFIMNFDTGSSDTWVMNTQMTDEEAKKDHHLYDPSKSKTASKLVDQTFDIKYGDKTHASGPVYSDVMDIGGATVRNQAIGLPSKVAASLAEDKTSDGLVGLAMTKLNTIRPVKQKTFFENLAEDLDEPVFTAQLRHGKMGSYEFGTIDKSKYHGDLIKVPVINENGFWEIPCSLYSVGKLDKIQTIQNGTGTAILDTGTTLLVLDEKIVKAYYAQVPGARYDPTRFAGWVYPCNSPMPSLFLAVGTDHMAIIPSSLLTFQSYGPGPDGVETCYGGLQSNNAGGIQILGDVFFKALFVVFDQRGPSISLAPHA.

An N-terminal signal peptide occupies residues M1–S17. Residues K18–E87 constitute a propeptide, activation peptide. The segment at Y66–H105 is disordered. Basic and acidic residues predominate over residues E87 to E97. A Peptidase A1 domain is found at F109–A427. D125 is a catalytic residue. An N-linked (GlcNAc...) asparagine glycan is attached at N306. D314 is a catalytic residue.

This sequence belongs to the peptidase A1 family.

Its subcellular location is the secreted. Its function is as follows. Probable secreted aspartic-type endopeptidase which contributes to virulence. The polypeptide is Probable aspartic-type endopeptidase ARB_07403 (Arthroderma benhamiae (strain ATCC MYA-4681 / CBS 112371) (Trichophyton mentagrophytes)).